A 567-amino-acid chain; its full sequence is Hydroxylamine reductase 2 (567 aa).

Residues Cys-5, Cys-8, Cys-17, and Cys-23 each coordinate [4Fe-4S] cluster. His-262, Glu-286, Cys-330, Cys-421, Cys-449, Cys-474, Glu-509, and Lys-511 together coordinate hybrid [4Fe-2O-2S] cluster. Cys-421 is modified (cysteine persulfide).

Belongs to the HCP family. It depends on [4Fe-4S] cluster as a cofactor. Hybrid [4Fe-2O-2S] cluster serves as cofactor.

Its subcellular location is the cytoplasm. It carries out the reaction A + NH4(+) + H2O = hydroxylamine + AH2 + H(+). Catalyzes the reduction of hydroxylamine to form NH(3) and H(2)O. The polypeptide is Hydroxylamine reductase 2 (Clostridium acetobutylicum (strain ATCC 824 / DSM 792 / JCM 1419 / IAM 19013 / LMG 5710 / NBRC 13948 / NRRL B-527 / VKM B-1787 / 2291 / W)).